Consider the following 203-residue polypeptide: VEL1-related protein SPBPB2B2.15 (203 aa).

The signal sequence occupies residues 1–16 (MFKNLIFLFFIGLATA).

This sequence belongs to the VEL1 family.

The protein localises to the cytoplasm. Its subcellular location is the cytosol. The chain is VEL1-related protein SPBPB2B2.15 from Schizosaccharomyces pombe (strain 972 / ATCC 24843) (Fission yeast).